We begin with the raw amino-acid sequence, 697 residues long: DNA ligase (697 aa).

Residues 41–45 (DPVYD), 90–91 (SL), and Glu-129 each bind NAD(+). Lys-131 serves as the catalytic N6-AMP-lysine intermediate. NAD(+)-binding residues include Arg-152, Glu-189, Lys-308, and Lys-332. The Zn(2+) site is built by Cys-426, Cys-429, Cys-444, and Cys-449. A BRCT domain is found at 617–697 (AANHHLTGST…ALQNMLRGST (81 aa)).

The protein belongs to the NAD-dependent DNA ligase family. LigA subfamily. Requires Mg(2+) as cofactor. It depends on Mn(2+) as a cofactor.

The enzyme catalyses NAD(+) + (deoxyribonucleotide)n-3'-hydroxyl + 5'-phospho-(deoxyribonucleotide)m = (deoxyribonucleotide)n+m + AMP + beta-nicotinamide D-nucleotide.. DNA ligase that catalyzes the formation of phosphodiester linkages between 5'-phosphoryl and 3'-hydroxyl groups in double-stranded DNA using NAD as a coenzyme and as the energy source for the reaction. It is essential for DNA replication and repair of damaged DNA. In Synechococcus sp. (strain CC9311), this protein is DNA ligase.